The chain runs to 691 residues: Lectin-domain containing receptor kinase VI.4 (691 aa).

Residues 1–19 (MGRAKSMVSLLLVLFLVRA) form the signal peptide. At 20-306 (HVATTETTTE…AKKRGYNGKV (287 aa)) the chain is on the extracellular side. Residues 26–273 (TTTEFIFHGF…AHYVMGWSFA (248 aa)) form a legume-lectin like region. The helical transmembrane segment at 307–327 (IALIVALSTVISIMLVLLFLF) threads the bilayer. Residues 328–691 (MMYKKRMQQE…ISSTSLISGR (364 aa)) lie on the Cytoplasmic side of the membrane. The 279-residue stretch at 363–641 (FKENRVVGTG…LNRDEDVPEI (279 aa)) folds into the Protein kinase domain. Residues 369–377 (VGTGGFGIV) and Lys392 each bind ATP. The Proton acceptor role is filled by Asp491.

This sequence in the C-terminal section; belongs to the protein kinase superfamily. Ser/Thr protein kinase family. The protein in the N-terminal section; belongs to the leguminous lectin family.

It is found in the cell membrane. The catalysed reaction is L-seryl-[protein] + ATP = O-phospho-L-seryl-[protein] + ADP + H(+). It catalyses the reaction L-threonyl-[protein] + ATP = O-phospho-L-threonyl-[protein] + ADP + H(+). Functionally, involved in negative regulation of abscisic acid response in seed germination. This Arabidopsis thaliana (Mouse-ear cress) protein is Lectin-domain containing receptor kinase VI.4 (LECRK64).